The following is a 347-amino-acid chain: Quinolinate synthase (347 aa).

Positions 47 and 68 each coordinate iminosuccinate. A [4Fe-4S] cluster-binding site is contributed by C113. Iminosuccinate-binding positions include 139-141 (YAN) and S156. C200 contacts [4Fe-4S] cluster. Residues 226–228 (HPE) and T243 contribute to the iminosuccinate site. Residue C297 coordinates [4Fe-4S] cluster.

This sequence belongs to the quinolinate synthase family. Type 1 subfamily. It depends on [4Fe-4S] cluster as a cofactor.

The protein localises to the cytoplasm. It carries out the reaction iminosuccinate + dihydroxyacetone phosphate = quinolinate + phosphate + 2 H2O + H(+). Its pathway is cofactor biosynthesis; NAD(+) biosynthesis; quinolinate from iminoaspartate: step 1/1. In terms of biological role, catalyzes the condensation of iminoaspartate with dihydroxyacetone phosphate to form quinolinate. The chain is Quinolinate synthase from Shigella boydii serotype 18 (strain CDC 3083-94 / BS512).